We begin with the raw amino-acid sequence, 356 residues long: Cyclin-dependent kinase 5 activator 1 (356 aa).

2 disordered regions span residues 1–53 and 66–99; these read MGAN…AKES and IQPV…FTRN. Low complexity-rich tracts occupy residues 40–49 and 71–92; these read SNTSSRSSSN and SRRS…SSDS.

Belongs to the cyclin-dependent kinase 5 activator family. Heterodimer composed of a catalytic subunit cdk-5 and a regulatory subunit cdka-1. Interaction with cdka-1 is required for cdk-5 activation. Expressed in all classes of neurons in the ventral cord.

The protein resides in the cytoplasm. It is found in the cell projection. Its subcellular location is the dendrite. It localises to the axon. Its function is as follows. Activator of the kinase cdk-5. In several motor neurons, promotes the polarized trafficking of synaptic vesicles and dense-core vesicles. In the ventral nerve cord, regulates the synaptic localization of the glutamate receptor, glr-1. In DA motor neurons, regulates axonal transport of synaptic vesicle precursors by inhibiting dynein-mediated retrograde transport. Regulates the polarized distribution of dense-core vesicles in DB motor neurons. May regulate these processes in association with cdk-5. May also play a role in GABAergic synaptic vesicle localization in the ventral nerve cord. This is Cyclin-dependent kinase 5 activator 1 from Caenorhabditis elegans.